The following is an 83-amino-acid chain: Protein MATERNALLY EXPRESSED GENE 3 (83 aa).

Positions Met1–Gln22 are cleaved as a signal peptide. Cysteines 60 and 82 form a disulfide.

The protein belongs to the MEG family. As to expression, expressed in endosperm, anther and pollen.

The polypeptide is Protein MATERNALLY EXPRESSED GENE 3 (MEG3) (Zea mays (Maize)).